A 567-amino-acid polypeptide reads, in one-letter code: Phenylalanine ammonia-lyase (567 aa).

The Proton donor/acceptor role is filled by tyrosine 78. Residues 167–169 (ASG) constitute a cross-link (5-imidazolinone (Ala-Gly)). The residue at position 168 (serine 168) is a 2,3-didehydroalanine (Ser). Residues asparagine 223, glutamine 311, arginine 317, asparagine 347, lysine 419, glutamate 448, and asparagine 451 each coordinate (E)-cinnamate.

It belongs to the PAL/histidase family. Homotetramer. Post-translationally, contains an active site 4-methylidene-imidazol-5-one (MIO), which is formed autocatalytically by cyclization and dehydration of residues Ala-Ser-Gly.

The protein localises to the cytoplasm. It catalyses the reaction L-phenylalanine = (E)-cinnamate + NH4(+). Its pathway is phenylpropanoid metabolism; trans-cinnamate biosynthesis; trans-cinnamate from L-phenylalanine: step 1/1. Functionally, catalyzes the non-oxidative deamination of L-phenylalanine to form trans-cinnamic acid, the first step in the phenylpropanoid pathway. This chain is Phenylalanine ammonia-lyase, found in Trichormus variabilis (strain ATCC 29413 / PCC 7937) (Anabaena variabilis).